A 297-amino-acid chain; its full sequence is Glycosylphosphatidylinositol anchor biosynthesis protein 11 (297 aa).

The span at 1 to 18 (MTSASPSPLRAANAASSA) shows a compositional bias: low complexity. The disordered stretch occupies residues 1–26 (MTSASPSPLRAANAASSAPVPPPAMK). The next 2 helical transmembrane spans lie at 44 to 64 (SFVH…ALVA) and 76 to 96 (FLAL…GSVL). Positions 97 to 140 (PSPPASPVSDGDEKEKEKEKEKEKEKEKRKLPLRAGKLPRKKNQ) are disordered. Residues 107–126 (GDEKEKEKEKEKEKEKEKRK) are compositionally biased toward basic and acidic residues. The segment covering 127 to 140 (LPLRAGKLPRKKNQ) has biased composition (basic residues). N-linked (GlcNAc...) asparagine glycosylation is present at asparagine 139. 4 consecutive transmembrane segments (helical) span residues 157-177 (LILT…LFGA), 187-207 (VLCA…VHGV), 225-245 (VWGG…PIPL), and 253-273 (AFPI…SVVC).

This sequence belongs to the PIGF family.

Its subcellular location is the endoplasmic reticulum membrane. It functions in the pathway glycolipid biosynthesis; glycosylphosphatidylinositol-anchor biosynthesis. Functionally, acts in the GPI biosynthetic pathway between GlcNAc-PI synthesis and GPI transfer to protein. The protein is Glycosylphosphatidylinositol anchor biosynthesis protein 11 (gpi11) of Aspergillus fumigatus (strain ATCC MYA-4609 / CBS 101355 / FGSC A1100 / Af293) (Neosartorya fumigata).